Here is a 168-residue protein sequence, read N- to C-terminus: Putative flavin-containing monooxygenase FMO GS-OX-like 11 (168 aa).

Residue 17-22 (GAGAAG) coordinates FAD.

Belongs to the FMO family. FAD serves as cofactor.

Its function is as follows. Catalyzes the conversion of methylthioalkyl glucosinolates of any chain length into methylsulfinylalkyl glucosinolates. This Arabidopsis thaliana (Mouse-ear cress) protein is Putative flavin-containing monooxygenase FMO GS-OX-like 11.